Reading from the N-terminus, the 250-residue chain is 2,5-dichloro-2,5-cyclohexadiene-1,4-diol dehydrogenase LinX (250 aa).

7 residues coordinate NAD(+): Asp-38, Asp-64, Val-65, Tyr-156, Lys-160, Thr-191, and Thr-194. The Proton acceptor role is filled by Tyr-156.

It belongs to the short-chain dehydrogenases/reductases (SDR) family.

The enzyme catalyses 2,5-dichlorocyclohexa-2,5-dien-1,4-diol + NAD(+) = 2,5-dichlorohydroquinone + NADH + H(+). Functionally, catalyzes the degradation of 2,5-dichloro-2,5-cyclohexadiene-1,4-diol (2,5-DDOL) into 2,5-dichlorohydroquinone (2,5-DCHQ) in vitro. LinX appears not to be involved in gamma-hexachlorocyclohexane (gamma-HCH) degradation pathway, in contrast to LinC which has the same enzymatic activity. The polypeptide is 2,5-dichloro-2,5-cyclohexadiene-1,4-diol dehydrogenase LinX (Sphingobium indicum (strain DSM 16412 / CCM 7286 / MTCC 6364 / B90A)).